The following is a 670-amino-acid chain: ATP synthase subunit alpha 2 (670 aa).

G180 to T187 is an ATP binding site. Residues M525–R670 form a disordered region. The segment covering A543–A588 has biased composition (basic and acidic residues). Low complexity predominate over residues A589 to P599. Over residues A621 to A639 the composition is skewed to basic and acidic residues. Over residues A650 to D661 the composition is skewed to low complexity.

Belongs to the ATPase alpha/beta chains family. In terms of assembly, F-type ATPases have 2 components, CF(1) - the catalytic core - and CF(0) - the membrane proton channel. CF(1) has five subunits: alpha(3), beta(3), gamma(1), delta(1), epsilon(1). CF(0) has three main subunits: a(1), b(2) and c(9-12). The alpha and beta chains form an alternating ring which encloses part of the gamma chain. CF(1) is attached to CF(0) by a central stalk formed by the gamma and epsilon chains, while a peripheral stalk is formed by the delta and b chains.

Its subcellular location is the cell inner membrane. It carries out the reaction ATP + H2O + 4 H(+)(in) = ADP + phosphate + 5 H(+)(out). Its function is as follows. Produces ATP from ADP in the presence of a proton gradient across the membrane. The alpha chain is a regulatory subunit. The chain is ATP synthase subunit alpha 2 from Burkholderia mallei (strain NCTC 10247).